The primary structure comprises 207 residues: Oligoribonuclease (207 aa).

Positions 8–172 constitute an Exonuclease domain; the sequence is LVWIDCEMTG…ADILESVREL (165 aa). The active site involves Tyr129.

The protein belongs to the oligoribonuclease family.

It is found in the cytoplasm. 3'-to-5' exoribonuclease specific for small oligoribonucleotides. This Leifsonia xyli subsp. xyli (strain CTCB07) protein is Oligoribonuclease.